The primary structure comprises 315 residues: Probable serine acetyltransferase 4 (315 aa).

Positions 287 to 315 are disordered; sequence AKPIIGKKAAPQRRPEELPGVTMEQRWSD.

The protein belongs to the transferase hexapeptide repeat family. In terms of assembly, homomultimer.

It catalyses the reaction L-serine + acetyl-CoA = O-acetyl-L-serine + CoA. The protein operates within amino-acid biosynthesis; L-cysteine biosynthesis; L-cysteine from L-serine: step 1/2. The sequence is that of Probable serine acetyltransferase 4 (SAT4) from Oryza sativa subsp. japonica (Rice).